Here is a 66-residue protein sequence, read N- to C-terminus: Large ribosomal subunit protein bL31 (66 aa).

Residues Cys16, Cys18, Cys36, and Cys39 each contribute to the Zn(2+) site.

It belongs to the bacterial ribosomal protein bL31 family. Type A subfamily. In terms of assembly, part of the 50S ribosomal subunit. Zn(2+) serves as cofactor.

In terms of biological role, binds the 23S rRNA. This chain is Large ribosomal subunit protein bL31, found in Moorella thermoacetica (strain ATCC 39073 / JCM 9320).